We begin with the raw amino-acid sequence, 57 residues long: Potassium channel toxin gamma-KTx 2.1 (57 aa).

Positions 1–21 are cleaved as a signal peptide; sequence MKISFVLLLTLFICSIGWSEA. 3 cysteine pairs are disulfide-bonded: cysteine 28-cysteine 49, cysteine 34-cysteine 54, and cysteine 38-cysteine 56.

The protein belongs to the short scorpion toxin superfamily. Potassium channel inhibitor family. Gamma-KTx 2 subfamily. In terms of tissue distribution, expressed by the venom gland.

It is found in the secreted. Its function is as follows. Blocks human and/or rat Kv11.1/KCNH2/ERG1, Kv11.2/KCNH6/ERG2 and Kv11.3/KCNH7/ERG3 by binding to channel outer vestibule (S5P domain) with a 1:1 stoichiometry. Inhibition data are the following: hERG1 (reversible, Kd=7.7 nM, IC(50)=3.3 nM, IC(50)=11.9 nM), rERG1 (reversible, Kd=19 nM), hERG2 (reversible, Kd=77 nM), rERG2 (irreversible, Kd=4.2 nM), hERG3 (reversible, Kd=11.5 nM) and rERG3 (reversible, Kd=747 nM) potassium channels. Also has a minimal effect on rat ELK1/KCNH4 potassium channels (9% inhibition at 100 nM). Both this toxin and CnErgTx1 (AC Q86QT3) share mechanism of action and have overlapping binding sites on ERG1. The potency of these two toxins is not affected by elevating potassium ion concentration from 2 to 98 mM. In addition, at high toxin concentrations, block of ERG1 macroscopic currents by these two toxins is incomplete (88%). The blockade by this toxin is preferentially closed channel state-dependent, with a component of open, but not inactive state-dependent blockade. This toxin produces a concentration-dependent prolongation of QTc in the isolated rabbit heart (16.3% at 100 nM). The protein is Potassium channel toxin gamma-KTx 2.1 of Mesobuthus eupeus (Lesser Asian scorpion).